Consider the following 177-residue polypeptide: UPF0178 protein TP_0845 (177 aa).

The tract at residues 155 to 177 (EAKTGEEQCDWPSAQGKSQTGRR) is disordered.

This sequence belongs to the UPF0178 family.

In Treponema pallidum (strain Nichols), this protein is UPF0178 protein TP_0845.